The following is a 177-amino-acid chain: Large ribosomal subunit protein uL6 (177 aa).

Belongs to the universal ribosomal protein uL6 family. Part of the 50S ribosomal subunit.

In terms of biological role, this protein binds to the 23S rRNA, and is important in its secondary structure. It is located near the subunit interface in the base of the L7/L12 stalk, and near the tRNA binding site of the peptidyltransferase center. The chain is Large ribosomal subunit protein uL6 from Cupriavidus necator (strain ATCC 17699 / DSM 428 / KCTC 22496 / NCIMB 10442 / H16 / Stanier 337) (Ralstonia eutropha).